The primary structure comprises 551 residues: Glucans biosynthesis protein D (551 aa).

The segment at residues 1–32 (MDRRRFIKGSMAMAAVCGTSGIASLFSQAAFA) is a signal peptide (tat-type signal).

It belongs to the OpgD/OpgG family. Predicted to be exported by the Tat system. The position of the signal peptide cleavage has not been experimentally proven.

The protein localises to the periplasm. The protein operates within glycan metabolism; osmoregulated periplasmic glucan (OPG) biosynthesis. In terms of biological role, probably involved in the control of the structural glucose backbone of osmoregulated periplasmic glucans (OPGs). The polypeptide is Glucans biosynthesis protein D (Escherichia coli O1:K1 / APEC).